The following is a 498-amino-acid chain: Polyamine aminopropyltransferase (498 aa).

The next 6 membrane-spanning stretches (helical) occupy residues 7-27 (ISVL…GTIA), 35-55 (VTQF…GSWL), 67-87 (FLEI…ILYL), 97-117 (IPLF…IPVL), 134-154 (VLSL…IFFA), and 163-183 (GFIF…VLPL). Positions 196–446 (VVVLTLLILG…AGQRPIQFKK (251 aa)) are spermidine synthase. A PABS domain is found at 200 to 439 (TLLILGFSYS…GEWGFVLAGQ (240 aa)). Glutamine 234 serves as a coordination point for S-methyl-5'-thioadenosine. Residues histidine 264 and aspartate 288 each contribute to the spermidine site. Residues aspartate 308 and 342–343 (DA) each bind S-methyl-5'-thioadenosine. Aspartate 360 serves as the catalytic Proton acceptor.

Belongs to the spermidine/spermine synthase family. Homodimer or homotetramer.

The protein localises to the cell membrane. The enzyme catalyses S-adenosyl 3-(methylsulfanyl)propylamine + putrescine = S-methyl-5'-thioadenosine + spermidine + H(+). The protein operates within amine and polyamine biosynthesis; spermidine biosynthesis; spermidine from putrescine: step 1/1. Its function is as follows. Catalyzes the irreversible transfer of a propylamine group from the amino donor S-adenosylmethioninamine (decarboxy-AdoMet) to putrescine (1,4-diaminobutane) to yield spermidine. The chain is Polyamine aminopropyltransferase from Leptospira interrogans serogroup Icterohaemorrhagiae serovar copenhageni (strain Fiocruz L1-130).